The sequence spans 203 residues: uncharacterized protein (203 aa).

This sequence belongs to the mimivirus L332/L333/L334 family.

This is an uncharacterized protein from Acanthamoeba polyphaga mimivirus (APMV).